Consider the following 312-residue polypeptide: Homoserine O-acetyltransferase (312 aa).

The active-site Acyl-thioester intermediate is the Cys142. Positions 163 and 192 each coordinate substrate. The active-site Proton acceptor is His235. Glu237 is an active-site residue. Arg249 contacts substrate.

This sequence belongs to the MetA family.

The protein resides in the cytoplasm. The catalysed reaction is L-homoserine + acetyl-CoA = O-acetyl-L-homoserine + CoA. Its pathway is amino-acid biosynthesis; L-methionine biosynthesis via de novo pathway; O-acetyl-L-homoserine from L-homoserine: step 1/1. Transfers an acetyl group from acetyl-CoA to L-homoserine, forming acetyl-L-homoserine. The sequence is that of Homoserine O-acetyltransferase from Ruegeria sp. (strain TM1040) (Silicibacter sp.).